We begin with the raw amino-acid sequence, 176 residues long: tRNA (cytidine(56)-2'-O)-methyltransferase (176 aa).

Residues L86 and 111–115 (GAEKV) contribute to the S-adenosyl-L-methionine site.

The protein belongs to the aTrm56 family. In terms of assembly, homodimer.

It localises to the cytoplasm. It carries out the reaction cytidine(56) in tRNA + S-adenosyl-L-methionine = 2'-O-methylcytidine(56) in tRNA + S-adenosyl-L-homocysteine + H(+). In terms of biological role, specifically catalyzes the AdoMet-dependent 2'-O-ribose methylation of cytidine at position 56 in tRNAs. The sequence is that of tRNA (cytidine(56)-2'-O)-methyltransferase from Methanoregula boonei (strain DSM 21154 / JCM 14090 / 6A8).